Here is a 493-residue protein sequence, read N- to C-terminus: Glutamyl-tRNA(Gln) amidotransferase subunit A (493 aa).

Catalysis depends on charge relay system residues K78 and S158. The active-site Acyl-ester intermediate is S182.

This sequence belongs to the amidase family. GatA subfamily. Heterotrimer of A, B and C subunits.

It carries out the reaction L-glutamyl-tRNA(Gln) + L-glutamine + ATP + H2O = L-glutaminyl-tRNA(Gln) + L-glutamate + ADP + phosphate + H(+). Its function is as follows. Allows the formation of correctly charged Gln-tRNA(Gln) through the transamidation of misacylated Glu-tRNA(Gln) in organisms which lack glutaminyl-tRNA synthetase. The reaction takes place in the presence of glutamine and ATP through an activated gamma-phospho-Glu-tRNA(Gln). In Rickettsia canadensis (strain McKiel), this protein is Glutamyl-tRNA(Gln) amidotransferase subunit A.